The chain runs to 640 residues: Chaperone protein DnaK (640 aa).

Position 196 is a phosphothreonine; by autocatalysis (T196). 2 disordered regions span residues 510–530 and 598–640; these read NDAKAHAEEDAKRKEEVETKN and AADA…DKDK.

It belongs to the heat shock protein 70 family.

Acts as a chaperone. The sequence is that of Chaperone protein DnaK from Prosthecochloris aestuarii (strain DSM 271 / SK 413).